We begin with the raw amino-acid sequence, 400 residues long: Dehydrogenase efuE (400 aa).

NAD(+)-binding positions include 222–223 (AI), 303–305 (TAR), and aspartate 329. Arginine 305 is a catalytic residue. Residue glutamate 334 is part of the active site. Histidine 352 acts as the Proton donor in catalysis. 352–355 (HLGG) is an NAD(+) binding site.

This sequence belongs to the D-isomer specific 2-hydroxyacid dehydrogenase family.

The protein operates within secondary metabolite biosynthesis; terpenoid biosynthesis. In terms of biological role, dehydrogenase; part of the gene cluster that mediates the biosynthesis of enfumafungin, a glycosylated fernene-type triterpenoid with potent antifungal activity, mediated by its interaction with beta-1,3-glucan synthase and the fungal cell wall. The pathway begins with the terpene cyclase-glycosyl transferase fusion protein that most likely uses 2,3-oxidosqualene as substrate and catalyzes glycosylation immediately after cyclization. The fernene glycoside then could be processed by the desaturase efuI which catalyzes isomerization of a double bond established by efuA to form the core structure. The latter would then undergo a series of hydroxylations in unknown order at C-2, C-19, C-23 and C-25, which would be catalyzed by two of the three cytochrome P450 monooxygenases efuB, efuG or efuH. The hydroxy-group at C-25 becomes oxidized by the dehydrogenase efuE to enable a spontaneous, non-enzymatic hemiacetal formation with C-23. After hydroxylation at C-2, acetylation by the acetyltransferase efuC takes place. The final steps in enfumafungin biosynthesis require expansion of the 5-membered ring by lactonization via a Baeyer-Villiger reaction mediated by one of the BGC's cytochrome P450 monooxygenases (efuB, efuG or efuH) followed by ring cleavage. This type of reaction would establish a double bond between C-20 and C-21 which could be reduced by the reductase efuL to form the final product. This is Dehydrogenase efuE from Hormonema carpetanum.